Reading from the N-terminus, the 215-residue chain is [PSI+] inducibility protein 3 (215 aa).

The residue at position 2 (S2) is an N-acetylserine. A phosphoserine mark is found at S52 and S55. The SH3 domain maps to 54-113; that stretch reads ASLEYVEALYQFDPQQDGDLGLKPGDKVQLLEKLSPEWYKGSCNGRTGIFPANYVKPAFS. K80 is covalently cross-linked (Glycyl lysine isopeptide (Lys-Gly) (interchain with G-Cter in ubiquitin)). A disordered region spans residues 114–189; the sequence is GSNGPSNLPP…HQSSHSHLKS (76 aa). Residues 124–127 carry the PY motif motif; it reads PPQY.

Belongs to the LSB1 family. Interacts with LAS17, RSP5 and SUP35. In terms of processing, ubiquitinated by RSP5. Ubiquitination reduces the protein abundance and its prion-inducing ability.

The protein resides in the cytoplasm. It localises to the nucleus. It is found in the cytoskeleton. Its subcellular location is the actin patch. Functionally, overproduction promotes the de novo induction of the [PSI+] prion form of SUP35. The prion-inducing effect depends on the association with the actin cytoskeleton. Also implicated in prion maintenance during heat stress. The sequence is that of [PSI+] inducibility protein 3 (PIN3) from Saccharomyces cerevisiae (strain ATCC 204508 / S288c) (Baker's yeast).